The primary structure comprises 150 residues: Cytochrome c oxidase subunit 5A, mitochondrial (150 aa).

The N-terminal 41 residues, Met1–Tyr41, are a transit peptide targeting the mitochondrion. The SIFI-degron signature appears at Leu2–Ala17. Lys87 and Lys113 each carry N6-acetyllysine. A Phosphothreonine modification is found at Thr141.

It belongs to the cytochrome c oxidase subunit 5A family. In terms of assembly, component of the cytochrome c oxidase (complex IV, CIV), a multisubunit enzyme composed of 14 subunits. The complex is composed of a catalytic core of 3 subunits MT-CO1, MT-CO2 and MT-CO3, encoded in the mitochondrial DNA, and 11 supernumerary subunits COX4I1 (or COX4I2), COX5A, COX5B, COX6A1 (or COX6A2), COX6B1 (or COX6B2), COX6C, COX7A2 (or COX7A1), COX7B, COX7C, COX8A and NDUFA4, which are encoded in the nuclear genome. The complex exists as a monomer or a dimer and forms supercomplexes (SCs) in the inner mitochondrial membrane with NADH-ubiquinone oxidoreductase (complex I, CI) and ubiquinol-cytochrome c oxidoreductase (cytochrome b-c1 complex, complex III, CIII), resulting in different assemblies (supercomplex SCI(1)III(2)IV(1) and megacomplex MCI(2)III(2)IV(2)). Interacts with AFG1L. Interacts with RAB5IF. Post-translationally, in response to mitochondrial stress, the precursor protein is ubiquitinated by the SIFI complex in the cytoplasm before mitochondrial import, leading to its degradation. Within the SIFI complex, UBR4 initiates ubiquitin chain that are further elongated or branched by KCMF1.

Its subcellular location is the mitochondrion inner membrane. Its pathway is energy metabolism; oxidative phosphorylation. Its function is as follows. Component of the cytochrome c oxidase, the last enzyme in the mitochondrial electron transport chain which drives oxidative phosphorylation. The respiratory chain contains 3 multisubunit complexes succinate dehydrogenase (complex II, CII), ubiquinol-cytochrome c oxidoreductase (cytochrome b-c1 complex, complex III, CIII) and cytochrome c oxidase (complex IV, CIV), that cooperate to transfer electrons derived from NADH and succinate to molecular oxygen, creating an electrochemical gradient over the inner membrane that drives transmembrane transport and the ATP synthase. Cytochrome c oxidase is the component of the respiratory chain that catalyzes the reduction of oxygen to water. Electrons originating from reduced cytochrome c in the intermembrane space (IMS) are transferred via the dinuclear copper A center (CU(A)) of subunit 2 and heme A of subunit 1 to the active site in subunit 1, a binuclear center (BNC) formed by heme A3 and copper B (CU(B)). The BNC reduces molecular oxygen to 2 water molecules using 4 electrons from cytochrome c in the IMS and 4 protons from the mitochondrial matrix. The protein is Cytochrome c oxidase subunit 5A, mitochondrial (COX5A) of Homo sapiens (Human).